We begin with the raw amino-acid sequence, 192 residues long: Putative BTB/POZ domain-containing protein At4g04090 (192 aa).

The BTB domain occupies 23-96 (VDVRLMARDS…TYSDGSMLSE (74 aa)).

The protein operates within protein modification; protein ubiquitination. May act as a substrate-specific adapter of an E3 ubiquitin-protein ligase complex (CUL3-RBX1-BTB) which mediates the ubiquitination and subsequent proteasomal degradation of target proteins. In Arabidopsis thaliana (Mouse-ear cress), this protein is Putative BTB/POZ domain-containing protein At4g04090.